Consider the following 352-residue polypeptide: Delta(7)-sterol 5(6)-desaturas erg3A (352 aa).

Asn39 carries N-linked (GlcNAc...) asparagine glycosylation. The next 3 helical transmembrane spans lie at 82–102, 128–147, and 167–187; these read FLSF…ISAT, IAQT…PFLV, and YYSI…IYWI. The Fatty acid hydroxylase domain maps to 174 to 299; that stretch reads PLFIAFTDFC…FTTLWDRLGG (126 aa). The Histidine box-1 motif lies at 188–192; the sequence is HRGLH. The Histidine box-2 signature appears at 201–205; it reads HKPHH. A helical transmembrane segment spans residues 231-251; that stretch reads HVFPFIFPLQKLAYVFLFGFI. A Histidine box-3 motif is present at residues 276–280; it reads HTMHH.

The protein belongs to the sterol desaturase family. It depends on Fe cation as a cofactor.

The protein resides in the endoplasmic reticulum membrane. Functionally, delta(7)-sterol 5(6)-desaturase; part of the third module of ergosterol biosynthesis pathway that includes the late steps of the pathway. Erg3A is a minor delta(7)-sterol 5(6)-desaturase within the ergosterol pathway, erg3B being the major one. The third module or late pathway involves the ergosterol synthesis itself through consecutive reactions that mainly occur in the endoplasmic reticulum (ER) membrane. Firstly, the squalene synthase erg9 catalyzes the condensation of 2 farnesyl pyrophosphate moieties to form squalene, which is the precursor of all steroids. Squalene synthase is crucial for balancing the incorporation of farnesyl diphosphate (FPP) into sterol and nonsterol isoprene synthesis. Secondly, squalene is converted into lanosterol by the consecutive action of the squalene epoxidase erg1 and the lanosterol synthase erg7. Then, the delta(24)-sterol C-methyltransferase erg6 methylates lanosterol at C-24 to produce eburicol. Eburicol is the substrate of the sterol 14-alpha demethylase encoded by cyp51A and cyp51B, to yield 4,4,24-trimethyl ergosta-8,14,24(28)-trienol. The C-14 reductase erg24 then reduces the C14=C15 double bond which leads to 4,4-dimethylfecosterol. A sequence of further demethylations at C-4, involving the C-4 demethylation complex containing the C-4 methylsterol oxidases erg25A or erg25B, the sterol-4-alpha-carboxylate 3-dehydrogenase erg26 and the 3-keto-steroid reductase erg27, leads to the production of fecosterol via 4-methylfecosterol. The C-8 sterol isomerase erg2 then catalyzes the reaction which results in unsaturation at C-7 in the B ring of sterols and thus converts fecosterol to episterol. The sterol-C5-desaturase erg3B then catalyzes the introduction of a C-5 double bond in the B ring to produce 5-dehydroepisterol. The 2 other sterol-C5-desaturases, erg3A and erg3C, seem to be less important in ergosterol biosynthesis. The C-22 sterol desaturase erg5 further converts 5-dehydroepisterol into ergosta-5,7,22,24(28)-tetraen-3beta-ol by forming the C-22(23) double bond in the sterol side chain. Finally, ergosta-5,7,22,24(28)-tetraen-3beta-ol is substrate of the C-24(28) sterol reductases erg4A and erg4B to produce ergosterol. Possible alternative sterol biosynthetic pathways might exist from fecosterol to ergosterol, depending on the activities of the erg3 isoforms. In Aspergillus fumigatus (strain ATCC MYA-4609 / CBS 101355 / FGSC A1100 / Af293) (Neosartorya fumigata), this protein is Delta(7)-sterol 5(6)-desaturas erg3A.